A 250-amino-acid chain; its full sequence is Bacteriorhodopsin-I (250 aa).

The next 7 helical transmembrane spans lie at 7 to 27 (EGIWLWLGTAGMFLGMLYFIA), 42 to 62 (IATILITAIAFVNYLAMALGF), 81 to 101 (YTDWLFTTPLLLYDLGLLAGA), 114 to 134 (VLMIGTGVVATLSAGSGVLSA), 139 to 159 (LVWWGISTAFLLVLLYFLFSS), 185 to 205 (VWLVYPVWWLVGSEGLGLVGI), and 207 to 227 (IETAGFMVIDLVAKVGFGIIL). Lys220 carries the N6-(retinylidene)lysine modification.

It belongs to the archaeal/bacterial/fungal opsin family. The covalent binding of retinal to the apoprotein, bacterioopsin, generates bacteriorhodopsin.

The protein resides in the membrane. Light-driven proton pump. In Haloarcula marismortui (strain ATCC 43049 / DSM 3752 / JCM 8966 / VKM B-1809) (Halobacterium marismortui), this protein is Bacteriorhodopsin-I (bop).